Consider the following 63-residue polypeptide: DNA gyrase inhibitor YacG (63 aa).

C9, C12, C28, and C32 together coordinate Zn(2+).

Belongs to the DNA gyrase inhibitor YacG family. As to quaternary structure, interacts with GyrB. Zn(2+) serves as cofactor.

In terms of biological role, inhibits all the catalytic activities of DNA gyrase by preventing its interaction with DNA. Acts by binding directly to the C-terminal domain of GyrB, which probably disrupts DNA binding by the gyrase. This is DNA gyrase inhibitor YacG from Salmonella arizonae (strain ATCC BAA-731 / CDC346-86 / RSK2980).